Reading from the N-terminus, the 601-residue chain is N-acetyltransferase ESCO2 (601 aa).

Residues Ser-29, Ser-75, Ser-223, and Ser-244 each carry the phosphoserine modification. Positions 222 to 243 (SSLENEPSLGRTQKSKSEVIED) are disordered. Over residues 282 to 305 (KEKLIKDSSDDRVSSKEHKVDKNE) the composition is skewed to basic and acidic residues. The segment at 282–315 (KEKLIKDSSDDRVSSKEHKVDKNEAFSSEDSLGE) is disordered. Residues 306–315 (AFSSEDSLGE) show a composition bias toward polar residues. Ser-312 carries the post-translational modification Phosphoserine. The segment at 387 to 411 (TVCKSCGMIYTASNPEDEMQHVQHH) adopts a CCHH-type zinc-finger fold. The residue at position 512 (Ser-512) is a Phosphoserine.

This sequence belongs to the acetyltransferase family. ECO subfamily. As to expression, widely expressed in fetal tissues. In adult, it is expressed in thymus, placenta and small intestine.

It localises to the nucleus. The protein localises to the chromosome. The catalysed reaction is L-lysyl-[protein] + acetyl-CoA = N(6)-acetyl-L-lysyl-[protein] + CoA + H(+). Its function is as follows. Acetyltransferase required for the establishment of sister chromatid cohesion. Couples the processes of cohesion and DNA replication to ensure that only sister chromatids become paired together. In contrast to the structural cohesins, the deposition and establishment factors are required only during the S phase. Acetylates the cohesin component SMC3. This is N-acetyltransferase ESCO2 from Homo sapiens (Human).